The sequence spans 741 residues: Hemolysin (741 aa).

The first 25 residues, 1 to 25 (MPKLNRCAIAIFTILSAISSPTLLA), serve as a signal peptide directing secretion. A propeptide spanning residues 26–157 (NINEPSGEAA…RSGFASPAPA (132 aa)) is cleaved from the precursor. 3 disulfide bridges follow: Cys182–Cys200, Cys497–Cys511, and Cys537–Cys549. The Ricin B-type lectin domain maps to 484–575 (RPVNLQLASF…LTNVYSGESL (92 aa)). Positions 607-741 (NAQESSPILG…LVKGVQFDLN (135 aa)) are beta-prism domain.

Belongs to the HlyA hemolysin family. In terms of assembly, monomer. Homoheptamer. After binding to target membranes the protein assembles into a heptameric pre-pore complex. Proteolytic cleavage triggers a conformation change that is required for membrane insertion and pore formation. Post-translationally, proteolytical cleavage is required to convert the 80 kDa hemolysin precursor into the active 65 kDa hemolysin.

The protein localises to the secreted. Its subcellular location is the host cell membrane. Bacterial hemolysin that causes cytolysis by forming heptameric pores in target host membranes. The chain is Hemolysin (hlyA) from Vibrio cholerae serotype O1 (strain ATCC 39315 / El Tor Inaba N16961).